The following is a 124-amino-acid chain: Small ribosomal subunit protein uS13 (124 aa).

The interval 94–124 is disordered; the sequence is KGLPVRGQRTKTNARTRKGPKRTVAGKKKAR.

This sequence belongs to the universal ribosomal protein uS13 family. In terms of assembly, part of the 30S ribosomal subunit. Forms a loose heterodimer with protein S19. Forms two bridges to the 50S subunit in the 70S ribosome.

Its function is as follows. Located at the top of the head of the 30S subunit, it contacts several helices of the 16S rRNA. In the 70S ribosome it contacts the 23S rRNA (bridge B1a) and protein L5 of the 50S subunit (bridge B1b), connecting the 2 subunits; these bridges are implicated in subunit movement. Contacts the tRNAs in the A and P-sites. In Pseudarthrobacter chlorophenolicus (strain ATCC 700700 / DSM 12829 / CIP 107037 / JCM 12360 / KCTC 9906 / NCIMB 13794 / A6) (Arthrobacter chlorophenolicus), this protein is Small ribosomal subunit protein uS13.